The sequence spans 527 residues: BTB/POZ domain-containing protein At4g01160 (527 aa).

One can recognise a BTB domain in the interval 111–180; sequence NNNTSVLSVQ…MYSNSLSVTA (70 aa). Residues 233–327 enclose the BACK domain; the sequence is VKPLTNAARQ…HMTTDRLKKI (95 aa).

The protein operates within protein modification; protein ubiquitination. Functionally, may act as a substrate-specific adapter of an E3 ubiquitin-protein ligase complex (CUL3-RBX1-BTB) which mediates the ubiquitination and subsequent proteasomal degradation of target proteins. In Arabidopsis thaliana (Mouse-ear cress), this protein is BTB/POZ domain-containing protein At4g01160.